The following is a 667-amino-acid chain: Acetolactate synthase 1, chloroplastic (667 aa).

Over residues 1 to 35 (MAAAAPSPSSSAFSKTLSPSSSTSSTLLPRSTFPF) the composition is skewed to low complexity. A disordered region spans residues 1-45 (MAAAAPSPSSSAFSKTLSPSSSTSSTLLPRSTFPFPHHPHKTTPP). A chloroplast-targeting transit peptide spans 1–94 (MAAAAPSPSS…VSRFAPDEPR (94 aa)). E141 is a binding site for thiamine diphosphate. A disulfide bridge connects residues C161 and C307. Residues R243, 349–370 (HGTV…FGVR), and 392–411 (DIDS…ICAD) each bind FAD. The interval 484–564 (QHQMWAAQYY…VKIMLLNNQH (81 aa)) is thiamine pyrophosphate binding. 2 residues coordinate Mg(2+): D535 and N562.

The protein belongs to the TPP enzyme family. Mg(2+) serves as cofactor. The cofactor is thiamine diphosphate.

Its subcellular location is the plastid. The protein localises to the chloroplast. The catalysed reaction is 2 pyruvate + H(+) = (2S)-2-acetolactate + CO2. Its pathway is amino-acid biosynthesis; L-isoleucine biosynthesis; L-isoleucine from 2-oxobutanoate: step 1/4. It functions in the pathway amino-acid biosynthesis; L-valine biosynthesis; L-valine from pyruvate: step 1/4. The protein is Acetolactate synthase 1, chloroplastic (ALS SURA) of Nicotiana tabacum (Common tobacco).